The sequence spans 312 residues: Coproporphyrin III ferrochelatase (312 aa).

Fe-coproporphyrin III contacts are provided by residues Tyr13, Arg30, 46-47, Ser54, and Tyr125; that span reads RY. Fe(2+) is bound by residues His182 and Glu263.

The protein belongs to the ferrochelatase family.

Its subcellular location is the cytoplasm. It catalyses the reaction Fe-coproporphyrin III + 2 H(+) = coproporphyrin III + Fe(2+). Its pathway is porphyrin-containing compound metabolism; protoheme biosynthesis. In terms of biological role, involved in coproporphyrin-dependent heme b biosynthesis. Catalyzes the insertion of ferrous iron into coproporphyrin III to form Fe-coproporphyrin III. In Oceanobacillus iheyensis (strain DSM 14371 / CIP 107618 / JCM 11309 / KCTC 3954 / HTE831), this protein is Coproporphyrin III ferrochelatase.